The chain runs to 1153 residues: MPELAVMDLGRQLCVKMKKQRKAEMTIPTAMKGLEIHFYLADTHQLEFFKACYTAEDLCVEAAKRCRISPLCHNLFALYEESQDLWYAPNHVFKVTDETSIKLHYRMRFYFTNWHGTSEIESPVWRHTLSKQKSVLNSQKTTEGTPLLDAASLDYLFAQGQYDFLRGLSPVRPTQTDEEHHEIENECLGMAVLAITHHAKSNNLPLSGAGAETSYKRFIPDSLNRTIKQRNFLTRIRISNVFKNFLNEFNSKTIQDSNIGLYDLKVKYLSTLETLTQGVGREIFKPKNLKVTGESEGSPAQMLPLGDNGMGYEVQVYGTTGISWRRKPAPNQLILKDKPKSKKIKGDKQWNDKKKDSGWTLFSDFHEITHIVIKDCCVTIYRQDNKTMELDLFYRDAALSFAALVDGYFRLTVDAHHYLCTDVAPSSVVQNLENGCHGPICTEYAIHKLRQEGNEEGTYVLRWSCTEYNFIIMTVVCIELDLCESRPVPQYKNFQIETSPQGYRLYGTDTFRPTLKELLEHLQGQLLRTDNLRFQLRRCCPPQPREISNLLVMTTDREPVPQKKTQVSQLSFDRILKEEIVQGEHLGRGTRTNIYAGILKPKSDDEDDLGGYSQEVKVVLKVLGSGHRDISLAFFETASMMRQISHKHTALLYGVCVRHQENIMVEEFVQYGPLDLFMRRQTTPLSTAWKFQVAKQLASALSYLEDKKMVHGYVCSKNILVARDGLDGEGGPFIKLSDPGIPITVLSREECVDRIPWIAPECVKDTANLTIAADKWSFGTTLWEICYNGEIPLKDKKLSEKERFYAAQCQLATPDCDELAKLMTHCMTYDPRQRLFFRAIVRDIVMVEKQNPSIQPVPMLEVDPTVFEKRFLKKIRDLGEGHFGKVELCRYDPRGDRTGELVAVKSLKPENREEQSNNLWREIHILRELYHENIVKYKGICNEEGGRSIKLIMEFLPAGSLKEYLPRNKAHINLKTLHNYSVQICQGMDYLGSRNYIHRDLAARNVLVENEGTVKIGDFGLTKSIKDNEGYYTVKDDLDSPVFWYAPECLIHCKFYRASDVWSFGVTMYELLTYCDASCSPMSVFLKLIGPTHGQMTVTRLVKVLEEGKRLPRPDDCSEQLYNLMRRCWEATPEKRIDFKSLIANFQQMLDNL.

Residues 32–416 (KGLEIHFYLA…GYFRLTVDAH (385 aa)) form the FERM domain. Residues 435-540 (GCHGPICTEY…NLRFQLRRCC (106 aa)) enclose the SH2; atypical domain. Protein kinase domains follow at residues 580-846 (IVQG…DIVM) and 872-1150 (LKKI…QQML). ATP contacts are provided by residues 878-886 (LGEGHFGKV) and K905. The active-site Proton acceptor is the D1000. Phosphotyrosine; by autocatalysis occurs at positions 1031 and 1032.

This sequence belongs to the protein kinase superfamily. Tyr protein kinase family. JAK subfamily. It depends on Mg(2+) as a cofactor.

The protein localises to the endomembrane system. It catalyses the reaction L-tyrosyl-[protein] + ATP = O-phospho-L-tyrosyl-[protein] + ADP + H(+). Its function is as follows. Tyrosine kinase of the non-receptor type, involved in the IFN-alpha/beta/gamma signal pathway. Appears to be required in early development for specific cell migrations (epiboly), expression of homeobox protein goosecoid and formation of anterior structures. The protein is Tyrosine-protein kinase JAK1 (jak1) of Danio rerio (Zebrafish).